A 331-amino-acid chain; its full sequence is Glycerophosphodiester phosphodiesterase 1 (331 aa).

The Cytoplasmic segment spans residues 1 to 2 (MW). The helical transmembrane segment at 3–23 (LWEEQGGLMGPFSFLLLVLLL) threads the bilayer. Topologically, residues 24–254 (LTRSPFNACL…WKQSMFVALD (231 aa)) are lumenal. The region spanning 65 to 331 (VSAIAHRGGS…SMLEDCTPEF (267 aa)) is the GP-PDE domain. Residues E97 and D99 each contribute to the Mg(2+) site. The N-linked (GlcNAc...) asparagine glycan is linked to N168. A Mg(2+)-binding site is contributed by D174. A glycan (N-linked (GlcNAc...) asparagine) is linked at N198. The chain crosses the membrane as a helical span at residues 255-275 (ILLDWSMHNILWYLCGVSAFL). Topologically, residues 276-331 (AQKDFISPDYVKKWSAKGIQVVAWTVNTFDEKSYYESHLGSSYITDSMLEDCTPEF) are cytoplasmic.

The protein belongs to the glycerophosphoryl diester phosphodiesterase family. Interacts with PRAF2. Interacts with RGS16. Mg(2+) is required as a cofactor. In terms of processing, N-glycosylated.

The protein resides in the cell membrane. The protein localises to the cytoplasmic vesicle membrane. It carries out the reaction sn-glycero-3-phospho-1D-myo-inositol + H2O = myo-inositol + sn-glycerol 3-phosphate + H(+). The catalysed reaction is 1-O-(1Z-octadecenyl)-sn-glycero-3-phospho-(N-5Z,8Z,11Z,14Z-eicosatetraenoyl)-ethanolamine + H2O = 1-O-(1Z-octadecenyl)-sn-glycero-3-phosphate + N-(5Z,8Z,11Z,14Z-eicosatetraenoyl)-ethanolamine + H(+). The enzyme catalyses 1-O-(1Z-octadecenyl)-sn-glycero-3-phospho-(N-9Z-octadecenoyl)-ethanolamine + H2O = 1-O-(1Z-octadecenyl)-sn-glycero-3-phosphate + N-(9Z-octadecenoyl) ethanolamine + H(+). It catalyses the reaction 1-O-(1Z-octadecenyl)-sn-glycero-3-phospho-N-hexadecanoyl-ethanolamine + H2O = 1-O-(1Z-octadecenyl)-sn-glycero-3-phosphate + N-hexadecanoylethanolamine + H(+). It carries out the reaction N-(4Z,7Z,10Z,13Z,16Z,19Z)-docosahexaenoyl-sn-glycero-3-phosphoethanolamine + H2O = N-(4Z,7Z,10Z,13Z,16Z,19Z)-docosahexaenoyl ethanolamine + sn-glycerol 3-phosphate + H(+). The catalysed reaction is N-eicosanoyl-sn-glycero-3-phosphoethanolamine + H2O = N-eicosanoyl ethanolamine + sn-glycerol 3-phosphate + H(+). The enzyme catalyses N-hexadecanoyl-sn-glycero-3-phosphoethanolamine + H2O = N-hexadecanoylethanolamine + sn-glycerol 3-phosphate + H(+). It catalyses the reaction N-(9Z-octadecenoyl)-sn-glycero-3-phosphoethanolamine + H2O = N-(9Z-octadecenoyl) ethanolamine + sn-glycerol 3-phosphate + H(+). It carries out the reaction N-(5Z,8Z,11Z,14Z-eicosatetraenoyl)-sn-glycero-3-phosphoethanolamine + H2O = N-(5Z,8Z,11Z,14Z-eicosatetraenoyl)-ethanolamine + sn-glycerol 3-phosphate + H(+). Inhibited by EDTA, calcium chloride, and zinc chloride. Enhanced by magnesium chloride. Glycerophosphodiester phosphodiesterase activity can be modulated by G-protein signaling pathways. Its function is as follows. Hydrolyzes the phosphodiester bond of glycerophosphodiesters such as glycerophosphoinositol (GroPIns) and glycerophosphoethanolamine (GroPEth), to yield a glycerol phosphate and an alcohol. Hydrolyzes glycerophospho-N-acylethanolamines to N-acylethanolamines in the brain and participates in bioactive N-acylethanolamine biosynthesis such as anandamide (an endocannabinoid), N-palmitoylethanolamine (an anti-inflammatory), and N-oleoylethanolamine (an anorexic). In addition, has a lysophospholipase D activity by hydrolyzing N-acyl-lysoplasmenylethanolamine (N-acyl-lysoPlsEt) to N-acylethanolamine. However lysophospholipase D activity is lower than glycerophosphodiester phosphodiesterase activity. Has little or no activity towards glycerophosphocholine. The sequence is that of Glycerophosphodiester phosphodiesterase 1 from Bos taurus (Bovine).